The sequence spans 107 residues: Nucleoid-associated protein Msil_0275 (107 aa).

Belongs to the YbaB/EbfC family. Homodimer.

The protein resides in the cytoplasm. It is found in the nucleoid. Its function is as follows. Binds to DNA and alters its conformation. May be involved in regulation of gene expression, nucleoid organization and DNA protection. The polypeptide is Nucleoid-associated protein Msil_0275 (Methylocella silvestris (strain DSM 15510 / CIP 108128 / LMG 27833 / NCIMB 13906 / BL2)).